The chain runs to 354 residues: Hyaluronan and proteoglycan link protein 1 (354 aa).

Residues Met1 to Ala15 constitute a propeptide that is removed on maturation. N-linked (GlcNAc...) asparagine glycosylation is found at Asn21 and Asn56. Residues Pro38 to Val152 form the Ig-like V-type domain. 5 disulfides stabilise this stretch: Cys61-Cys139, Cys181-Cys252, Cys205-Cys226, Cys279-Cys349, and Cys304-Cys325. Link domains are found at residues Val159–Thr254 and Gly259–Arg351.

Belongs to the HAPLN family.

It localises to the secreted. It is found in the extracellular space. The protein resides in the extracellular matrix. Functionally, stabilizes the aggregates of proteoglycan monomers with hyaluronic acid in the extracellular cartilage matrix. The chain is Hyaluronan and proteoglycan link protein 1 (HAPLN1) from Bos taurus (Bovine).